Reading from the N-terminus, the 184-residue chain is GMP synthase [glutamine-hydrolyzing] subunit A (184 aa).

Residues 3–184 enclose the Glutamine amidotransferase type-1 domain; that stretch reads HIAVIDNHGQ…VFKNFIARCQ (182 aa). The active-site Nucleophile is C75. Residues H163 and E165 contribute to the active site.

As to quaternary structure, heterodimer composed of a glutamine amidotransferase subunit (A) and a GMP-binding subunit (B).

It carries out the reaction XMP + L-glutamine + ATP + H2O = GMP + L-glutamate + AMP + diphosphate + 2 H(+). It participates in purine metabolism; GMP biosynthesis; GMP from XMP (L-Gln route): step 1/1. Functionally, catalyzes the synthesis of GMP from XMP. The chain is GMP synthase [glutamine-hydrolyzing] subunit A from Haloquadratum walsbyi (strain DSM 16790 / HBSQ001).